Here is a 570-residue protein sequence, read N- to C-terminus: MPGETEEPRPPEQQDQEGGEAAKAAPEEPQQRPPEAVAAAPAGTTSSRVLRGGRDRGRAAAAAAAAAVSRRRKAEYPRRRRSSPSARPPDVPGQQPQAAKSPSPVQGKKSPRLLCIEKVTTDKDPKEEKEEEDDSALPQEVSIAASRPSRGWRSSRTSVSRHRDTENTRSSRSKTGSLQLICKSEPNTDQLDYDVGEEHQSPGGISSEEEEEEEEEMLISEEEIPFKDDPRDETYKPHLERETPKPRRKSGKVKEEKEKKEIKVEVEVEVKEEENEIREDEEPPRKRGRRRKDDKSPRLPKRRKKPPIQYVRCEMEGCGTVLAHPRYLQHHIKYQHLLKKKYVCPHPSCGRLFRLQKQLLRHAKHHTDQRDYICEYCARAFKSSHNLAVHRMIHTGEKPLQCEICGFTCRQKASLNWHMKKHDADSFYQFSCNICGKKFEKKDSVVAHKAKSHPEVLIAEALAANAGALITSTDILGTNPESLTQPSDGQGLPLLPEPLGNSTSGECLLLEAEGMSKSYCSGTERVSLMADGKIFVGSGSSGGTEGLVMNSDILGATTEVLIEDSDSAGP.

Basic and acidic residues predominate over residues 1–12 (MPGETEEPRPPE). The interval 1-306 (MPGETEEPRP…PRLPKRRKKP (306 aa)) is disordered. Low complexity-rich tracts occupy residues 31-43 (QRPPEAVAAAPAG) and 59-68 (AAAAAAAAAV). The segment covering 69–82 (SRRRKAEYPRRRRS) has biased composition (basic residues). 2 positions are modified to phosphoserine: serine 83 and serine 103. Polar residues predominate over residues 94 to 104 (QQPQAAKSPSP). Positions 119 to 128 (VTTDKDPKEE) are enriched in basic and acidic residues. Acidic residues predominate over residues 207–223 (SEEEEEEEEEMLISEEE). 2 stretches are compositionally biased toward basic and acidic residues: residues 224–245 (IPFKDDPRDETYKPHLERETPK) and 252–269 (KVKEEKEKKEIKVEVEVE). The segment covering 270-282 (VKEEENEIREDEE) has biased composition (acidic residues). 5 C2H2-type zinc fingers span residues 311–336 (VRCEMEGCGTVLAHPRYLQHHIKYQH), 342–366 (YVCPHPSCGRLFRLQKQLLRHAKHH), 372–394 (YICEYCARAFKSSHNLAVHRMIH), 400–422 (LQCEICGFTCRQKASLNWHMKKH), and 430–453 (FSCNICGKKFEKKDSVVAHKAKSH). An interaction with MAP3K14/NIK region spans residues 338 to 368 (LKKKYVCPHPSCGRLFRLQKQLLRHAKHHTD).

This sequence belongs to the krueppel C2H2-type zinc-finger protein family. As to quaternary structure, interacts with MAP3K14/NIK. In terms of tissue distribution, expressed ubiquitously, particularly at high level in testis. Isoform 2 is testis specific.

The protein localises to the nucleus. It catalyses the reaction S-ubiquitinyl-[E2 ubiquitin-conjugating enzyme]-L-cysteine + [acceptor protein]-L-lysine = [E2 ubiquitin-conjugating enzyme]-L-cysteine + N(6)-ubiquitinyl-[acceptor protein]-L-lysine.. The protein operates within protein modification; protein ubiquitination. Atypical E3 ubiquitin-protein ligase that mediates 'Lys-63'-linked ubiquitination of MAP3K14/NIK, leading to stabilize and activate MAP3K14/NIK. It thereby acts as an activator of the non-canonical NF-kappa-B2/NFKB2 pathway. May also play an important role in cell proliferation and/or anti-apoptosis. The chain is E3 ubiquitin-protein ligase ZFP91 (ZFP91) from Homo sapiens (Human).